Reading from the N-terminus, the 514-residue chain is Vacuolar aminopeptidase 1 (514 aa).

Residues 1–45 constitute a propeptide, required for vacuolar localization. Mediates aggregation and vesicle formation in Cvt pathway; it reads MEEQREILEQLKKTLQMLTVEPSKNNQIANEEKEKKENENSWCIL. N-linked (GlcNAc...) asparagine glycans are attached at residues Asn107 and Asn110. His132 lines the Zn(2+) pocket. His210 is a binding site for substrate. Residues Asp303, Glu339, and Glu340 each coordinate Zn(2+). Residue Glu339 participates in substrate binding. Ser356 carries the phosphoserine modification. Asp385 provides a ligand contact to Zn(2+). Substrate contacts are provided by Asp385 and His388. An N-linked (GlcNAc...) asparagine glycan is attached at Asn448. His479 lines the Zn(2+) pocket.

This sequence belongs to the peptidase M18 family. As to quaternary structure, homododecamer. The precursor form of aminopeptidase 1 (prApe1) assembles into dodecamers and further aggregates into higher multimers (the Ape1 complex) in the cytoplasm. The Ape1 complex is disaggregated in the vacuolar lumen, but mature aminopeptidase 1 (mApe1) retains its dodecameric form. Dodecamer assembly in the cytoplasm is essential for formation of an enzymatically active complex. If cytoplasmic homododecamerization of prApe1 is disturbed in mutants, homododecamers of mApe1 will form in the vacuole, but they are enzymatically inactive. Interacts with ATG19. The cofactor is Zn(2+). Synthesized in a precursor form (prApe1) that has an amino-terminal propeptide. The N-terminal extension of the 61 kDa precursor is proteolytically processed in two sequential steps. The first step involves proteinase A (PrA/PEP4) and produces a 55 kDa unstable intermediate (iAPI). The second step involves proteinase B (PrB/PRB1) and converts iAPI into the 50 kDa stable, mature enzyme (mApe1).

The protein localises to the vacuole. The enzyme catalyses Release of an N-terminal amino acid, preferably a neutral or hydrophobic one, from a polypeptide. Aminoacyl-arylamides are poor substrates.. With respect to regulation, strongly and specifically activated by Cl(-) and Br(-), which act as positive allosteric effectors. Inactivated by metal-chelating agents. Its function is as follows. Resident vacuolar enzyme that catalyzes the removal of amino acids from the N-terminus of peptides and proteins. Also acts as the major cargo protein of the cytoplasm-to-vacuole targeting (Cvt) pathway. The precursor form of aminopeptidase 1 (prApe1) assembles into dodecamers and the propeptide mediates the aggregation of dodecamers into higher multimers. The multimers are then recognized via the propeptide by their receptor ATG19, and ATG19 further interacts with ATG11, which tethers the APE1-ATG19 complex to the pre-autophagosomal structure (PAS). The cargo-receptor complex (also Cvt complex) is selectively enwrapped by a double-membrane structure termed the Cvt vesicle under vegetative growth conditions and by a similar but larger double-membrane structure termed the autophagosome under nitrogen starvation conditions. The Cvt vesicle or the autophagosome fuses with the vacuolar membrane and release its content in the vacuolar lumen. In the vacuole, prApe1 is processed into mature aminopeptidase 1 (mApe1). The polypeptide is Vacuolar aminopeptidase 1 (Saccharomyces cerevisiae (strain ATCC 204508 / S288c) (Baker's yeast)).